The chain runs to 69 residues: uncharacterized protein (69 aa).

The protein localises to the mitochondrion. This is an uncharacterized protein from Marchantia polymorpha (Common liverwort).